Here is a 321-residue protein sequence, read N- to C-terminus: Hydropyrene synthase (321 aa).

Asp82, Asn225, Ser229, and Glu233 together coordinate Mg(2+). The short motif at 82–87 (DDRAID) is the DDxx(x)D/E motif element. Residues 225–233 (NDLHSFARE) carry the NDxxSxxxD/E motif motif.

Belongs to the terpene synthase family. It depends on Mg(2+) as a cofactor.

The catalysed reaction is (2E,6E,10E)-geranylgeranyl diphosphate = hydropyrene + diphosphate. It carries out the reaction (2E,6E,10E)-geranylgeranyl diphosphate + H2O = hydropyrenol + diphosphate. The enzyme catalyses (2E,6E,10E)-geranylgeranyl diphosphate = isoelisabethatriene + diphosphate. The protein operates within secondary metabolite biosynthesis; terpenoid biosynthesis. Functionally, terpene synthase that catalyzes the conversion of geranylgeranyl diphosphate (GGPP) into a mixture of diterpenes, including hydropyrene (HP), hydropyrenol (HPol), isoelisabethatriene and traces of isoelisabethatriene B. Hydropyrene is the main product. Some other diterpenoids are also produced in very low quantities. The protein is Hydropyrene synthase of Streptomyces clavuligerus.